We begin with the raw amino-acid sequence, 82 residues long: Delta-actitoxin-Aeq2a (82 aa).

The first 19 residues, 1–19, serve as a signal peptide directing secretion; sequence MNRLMILVFAAVFLALASA. A propeptide spanning residues 20-26 is cleaved from the precursor; that stretch reads DEDVDIA. 3 disulfide bridges follow: Cys-32/Cys-79, Cys-34/Cys-69, and Cys-62/Cys-80.

Belongs to the sea anemone sodium channel inhibitory toxin family. Type I subfamily.

It localises to the secreted. It is found in the nematocyst. Its function is as follows. Binds specifically to voltage-gated sodium channels (Nav), thereby delaying their inactivation during signal transduction. Causes death to crabs (minimum lethal dose of 25 ug/kg) and mice. This chain is Delta-actitoxin-Aeq2a, found in Actinia equina (Beadlet anemone).